A 494-amino-acid polypeptide reads, in one-letter code: V-type proton ATPase subunit B (494 aa).

Arg-384 is an ATP binding site.

The protein belongs to the ATPase alpha/beta chains family. As to quaternary structure, V-ATPase is a heteromultimeric enzyme made up of two complexes: the ATP-hydrolytic V1 complex and the proton translocation V0 complex. The V1 complex consists of three catalytic AB heterodimers that form a heterohexamer, three peripheral stalks each consisting of EG heterodimers, one central rotor including subunits D and F, and the regulatory subunits C and H. The proton translocation complex V0 consists of the proton transport subunit a, a ring of proteolipid subunits c9c'', rotary subunit d, subunits e and f, and the accessory subunits VhaAC45 and ATP6AP2.

In terms of biological role, non-catalytic subunit of the V1 complex of vacuolar(H+)-ATPase (V-ATPase), a multisubunit enzyme composed of a peripheral complex (V1) that hydrolyzes ATP and a membrane integral complex (V0) that translocates protons. V-ATPase is responsible for acidifying and maintaining the pH of intracellular compartments and in some cell types, is targeted to the plasma membrane, where it is responsible for acidifying the extracellular environment. Essential for the proper assembly and activity of V-ATPase. The sequence is that of V-type proton ATPase subunit B (VHA55) from Manduca sexta (Tobacco hawkmoth).